The chain runs to 1699 residues: Hybrid signal transduction histidine kinase E (1699 aa).

Disordered regions lie at residues 1–32 and 58–97; these read MDKLKINNNLSPPSSPSSSTTTPNLSSTNLEN and NNIIINNNNNNNNNNNNNNNNNNNNSNNNNNNINNNNPNV. The segment covering 7-32 has biased composition (low complexity); that stretch reads NNNLSPPSSPSSSTTTPNLSSTNLEN. 6 helical membrane passes run 142–162, 164–184, 191–211, 238–258, 262–282, and 295–315; these read CILLGECGVYVFIYMFFLIFL, SFYPIFICGIVSMIVLYIVST, LVALIYIFVQSILNFTFFLQI, LNFLFIMNLILSLISIQIFFP, FSITLTCSLNIFNIIIHLISI, and NLIVPITVSFLLSFYSYILSI. Residues 412 to 432 are compositionally biased toward polar residues; it reads ITNGGNNKQTSTTSANSTPRY. Disordered stretches follow at residues 412–439 and 542–593; these read ITNGGNNKQTSTTSANSTPRYNNYNNNN and LLNN…NISN. Over residues 544–593 the composition is skewed to low complexity; the sequence is NNNNNNNNNNNNNNNNNNNNNNNNNNSNNNNNNNSNNNNNNNNINNNISN. Residues 678-950 enclose the Histidine kinase domain; that stretch reads TVSHEVRTPI…AFSFTSILST (273 aa). His-681 is subject to Phosphohistidine; by autocatalysis. Disordered stretches follow at residues 819–866, 1018–1054, 1186–1239, 1252–1294, and 1351–1406; these read NNNN…NNNN, NNNNNNNNNNNNNNNNNNNNNNNNDNNNNNNNNNDNN, KKQQ…RKSS, MVQV…NPNN, and SIPI…SPPP. Over residues 1198–1212 the composition is skewed to polar residues; the sequence is MGDTLSSTKSPQYTN. Low complexity predominate over residues 1219–1239; that stretch reads SSSSNGSLNKSNRSNLLRKSS. Positions 1271–1282 are enriched in polar residues; sequence KGNNSNPNSTEL. Low complexity-rich tracts occupy residues 1283 to 1294 and 1355 to 1392; these read NSTNSVNGNPNN and NINNNDNNNNNNNNNNNNNNNNNNNNNNNNNNNNNNNN. The 121-residue stretch at 1575–1695 folds into the Response regulatory domain; the sequence is NALIVDDTEL…TLKDTLLKWG (121 aa). At Asp-1625 the chain carries 4-aspartylphosphate.

The protein resides in the membrane. It carries out the reaction ATP + protein L-histidine = ADP + protein N-phospho-L-histidine.. Its function is as follows. May act in a signal transduction pathway. This protein undergoes an ATP-dependent autophosphorylation at a conserved histidine residue in the kinase core, and a phosphoryl group is then transferred to a conserved aspartate residue in the receiver domain. The protein is Hybrid signal transduction histidine kinase E (dhkE) of Dictyostelium discoideum (Social amoeba).